A 445-amino-acid polypeptide reads, in one-letter code: RCC1 domain-containing protein RUG3, mitochondrial (445 aa).

Residues 1–22 (MAALSHRLRSFTRRFSSTRTTQ) constitute a mitochondrion transit peptide. RCC1 repeat units lie at residues 47–101 (TLQL…DSSS), 118–169 (DGDL…ALTH), 171–221 (GDVF…AITE), 222–279 (SGEL…ALTK), 280–331 (EGQL…ALTE), 333–383 (GKVL…AITD), and 385–442 (GELW…CLVS).

Interacts with ATM. As to expression, mostly expressed in roots and rosette leaves of young seedlings, and, to a lower extent, in the flowers and siliques of mature plants. Preferentially expressed in the vascular tissues.

Its subcellular location is the mitochondrion. Its function is as follows. Regulates DNA damage response (DDR) synergistically with ATM. Together with ATM, involved in the splicing of the ND2/NAD2 mRNA. Required for the accumulation of mitochondrial respiratory chain complex I. Negative regulator of plant responses to abscisic acid (ABA). May have a pivotal role in vegetative growth and the phase transition from vegetative to reproductive growth. The sequence is that of RCC1 domain-containing protein RUG3, mitochondrial from Arabidopsis thaliana (Mouse-ear cress).